Consider the following 672-residue polypeptide: DNA ligase (672 aa).

NAD(+) contacts are provided by residues 34–38 (DAEYD), 83–84 (SL), and Glu117. Lys119 (N6-AMP-lysine intermediate) is an active-site residue. Arg140, Glu177, Lys293, and Lys317 together coordinate NAD(+). Residues Cys411, Cys414, Cys429, and Cys434 each coordinate Zn(2+). A BRCT domain is found at 591 to 672 (RVGGRFTGKT…FLAMLGVCRT (82 aa)).

The protein belongs to the NAD-dependent DNA ligase family. LigA subfamily. Requires Mg(2+) as cofactor. Mn(2+) serves as cofactor.

It carries out the reaction NAD(+) + (deoxyribonucleotide)n-3'-hydroxyl + 5'-phospho-(deoxyribonucleotide)m = (deoxyribonucleotide)n+m + AMP + beta-nicotinamide D-nucleotide.. Its function is as follows. DNA ligase that catalyzes the formation of phosphodiester linkages between 5'-phosphoryl and 3'-hydroxyl groups in double-stranded DNA using NAD as a coenzyme and as the energy source for the reaction. It is essential for DNA replication and repair of damaged DNA. This Geotalea uraniireducens (strain Rf4) (Geobacter uraniireducens) protein is DNA ligase.